Reading from the N-terminus, the 641-residue chain is 1,3-beta-glucanosyltransferase PGA5 (641 aa).

Positions 1-23 (MTTLSTIWLFLITITAIFQLGLS) are cleaved as a signal peptide. N25 carries N-linked (GlcNAc...) asparagine glycosylation. A disulfide bond links C106 and C135. (1,3-beta-D-glucosyl)n-binding residues include Y124, N192, E193, D234, and R239. E193 (proton donor) is an active-site residue. Disulfide bonds link C248–C390, C276–C307, C424–C474, C426–C528, C433–C498, and C451–C456. Catalysis depends on E304, which acts as the Nucleophile. Residue Y336 participates in (1,3-beta-D-glucosyl)n binding. The interval 535–613 (KEEEKEVQEE…SPKTSKSIAG (79 aa)) is disordered. Basic and acidic residues predominate over residues 571-581 (KSKEKEKGKLI). Over residues 582-593 (EEEEEEEEEEEE) the composition is skewed to acidic residues. Positions 596–610 (KTPSSGEKSPKTSKS) are enriched in polar residues. N621 is a glycosylation site (N-linked (GlcNAc...) asparagine). Residue D622 is the site of GPI-anchor amidated aspartate attachment. A propeptide spans 623 to 641 (SIWKTFIEILFTCSAAILI) (removed in mature form).

This sequence belongs to the glycosyl hydrolase 72 family.

Its subcellular location is the cell membrane. Its function is as follows. Splits internally a 1,3-beta-glucan molecule and transfers the newly generated reducing end (the donor) to the non-reducing end of another 1,3-beta-glucan molecule (the acceptor) forming a 1,3-beta linkage, resulting in the elongation of 1,3-beta-glucan chains in the cell wall. Involved in spore wall assembly. The sequence is that of 1,3-beta-glucanosyltransferase PGA5 (PGA5) from Candida albicans (strain SC5314 / ATCC MYA-2876) (Yeast).